A 433-amino-acid polypeptide reads, in one-letter code: 5-methylthioadenosine/S-adenosylhomocysteine deaminase (433 aa).

Residues H62 and H64 each contribute to the Zn(2+) site. Residues E91, R143, and H183 each coordinate substrate. H210 is a binding site for Zn(2+). Substrate is bound by residues E213 and D298. Zn(2+) is bound at residue D298.

This sequence belongs to the metallo-dependent hydrolases superfamily. MTA/SAH deaminase family. It depends on Zn(2+) as a cofactor.

It carries out the reaction S-adenosyl-L-homocysteine + H2O + H(+) = S-inosyl-L-homocysteine + NH4(+). The enzyme catalyses S-methyl-5'-thioadenosine + H2O + H(+) = S-methyl-5'-thioinosine + NH4(+). In terms of biological role, catalyzes the deamination of 5-methylthioadenosine and S-adenosyl-L-homocysteine into 5-methylthioinosine and S-inosyl-L-homocysteine, respectively. Is also able to deaminate adenosine. The sequence is that of 5-methylthioadenosine/S-adenosylhomocysteine deaminase from Caldanaerobacter subterraneus subsp. tengcongensis (strain DSM 15242 / JCM 11007 / NBRC 100824 / MB4) (Thermoanaerobacter tengcongensis).